The chain runs to 259 residues: Phosphatidylserine decarboxylase proenzyme (259 aa).

Residues Asp86, His142, and Ser226 each act as charge relay system; for autoendoproteolytic cleavage activity in the active site. The active-site Schiff-base intermediate with substrate; via pyruvic acid; for decarboxylase activity is the Ser226. Pyruvic acid (Ser); by autocatalysis is present on Ser226.

Belongs to the phosphatidylserine decarboxylase family. PSD-B subfamily. Prokaryotic type I sub-subfamily. As to quaternary structure, heterodimer of a large membrane-associated beta subunit and a small pyruvoyl-containing alpha subunit. The cofactor is pyruvate. In terms of processing, is synthesized initially as an inactive proenzyme. Formation of the active enzyme involves a self-maturation process in which the active site pyruvoyl group is generated from an internal serine residue via an autocatalytic post-translational modification. Two non-identical subunits are generated from the proenzyme in this reaction, and the pyruvate is formed at the N-terminus of the alpha chain, which is derived from the carboxyl end of the proenzyme. The autoendoproteolytic cleavage occurs by a canonical serine protease mechanism, in which the side chain hydroxyl group of the serine supplies its oxygen atom to form the C-terminus of the beta chain, while the remainder of the serine residue undergoes an oxidative deamination to produce ammonia and the pyruvoyl prosthetic group on the alpha chain. During this reaction, the Ser that is part of the protease active site of the proenzyme becomes the pyruvoyl prosthetic group, which constitutes an essential element of the active site of the mature decarboxylase.

Its subcellular location is the cell membrane. It catalyses the reaction a 1,2-diacyl-sn-glycero-3-phospho-L-serine + H(+) = a 1,2-diacyl-sn-glycero-3-phosphoethanolamine + CO2. The protein operates within phospholipid metabolism; phosphatidylethanolamine biosynthesis; phosphatidylethanolamine from CDP-diacylglycerol: step 2/2. Catalyzes the formation of phosphatidylethanolamine (PtdEtn) from phosphatidylserine (PtdSer). This Geobacillus sp. (strain WCH70) protein is Phosphatidylserine decarboxylase proenzyme.